The primary structure comprises 146 residues: uncharacterized protein (146 aa).

This is an uncharacterized protein from Orgyia pseudotsugata (Douglas-fir tussock moth).